The following is a 612-amino-acid chain: Dihydroxy-acid dehydratase (612 aa).

Mg(2+) is bound at residue aspartate 81. [2Fe-2S] cluster is bound at residue cysteine 122. Positions 123 and 124 each coordinate Mg(2+). At lysine 124 the chain carries N6-carboxylysine. [2Fe-2S] cluster is bound at residue cysteine 193. Glutamate 489 lines the Mg(2+) pocket. Residue serine 515 is the Proton acceptor of the active site.

This sequence belongs to the IlvD/Edd family. In terms of assembly, homodimer. Requires [2Fe-2S] cluster as cofactor. It depends on Mg(2+) as a cofactor.

The enzyme catalyses (2R)-2,3-dihydroxy-3-methylbutanoate = 3-methyl-2-oxobutanoate + H2O. It catalyses the reaction (2R,3R)-2,3-dihydroxy-3-methylpentanoate = (S)-3-methyl-2-oxopentanoate + H2O. Its pathway is amino-acid biosynthesis; L-isoleucine biosynthesis; L-isoleucine from 2-oxobutanoate: step 3/4. It functions in the pathway amino-acid biosynthesis; L-valine biosynthesis; L-valine from pyruvate: step 3/4. In terms of biological role, functions in the biosynthesis of branched-chain amino acids. Catalyzes the dehydration of (2R,3R)-2,3-dihydroxy-3-methylpentanoate (2,3-dihydroxy-3-methylvalerate) into 2-oxo-3-methylpentanoate (2-oxo-3-methylvalerate) and of (2R)-2,3-dihydroxy-3-methylbutanoate (2,3-dihydroxyisovalerate) into 2-oxo-3-methylbutanoate (2-oxoisovalerate), the penultimate precursor to L-isoleucine and L-valine, respectively. The chain is Dihydroxy-acid dehydratase from Xanthomonas campestris pv. campestris (strain 8004).